A 465-amino-acid polypeptide reads, in one-letter code: Innexin-11 (465 aa).

The next 4 membrane-spanning stretches (helical) occupy residues 29–49, 105–125, 195–215, and 286–306; these read LMTP…QFGG, QWVP…SYLW, SGFI…NVFA, and IFVL…VSLV. Residues 433–465 form a disordered region; the sequence is ISTSLMPDKDDIESSSTSSEEDQKRVSNVITNI.

It belongs to the pannexin family.

It localises to the cell membrane. Its subcellular location is the cell junction. The protein localises to the gap junction. Its function is as follows. Structural component of the gap junctions. In Caenorhabditis elegans, this protein is Innexin-11 (inx-11).